Reading from the N-terminus, the 21-residue chain is Bradykinin-potentiating peptide K12 (21 aa).

Residues leucine 1–alanine 21 form a disordered region.

In terms of tissue distribution, expressed by the venom gland.

It localises to the secreted. In terms of biological role, inhibits angiotensin-converting enzyme (ACE), but does not serve as substrate for the enzyme. Potentiate bradykinin (BK) on the isolated guinea pig ileum as well as the isolated rat uterus for contraction. Also potentiates in vivo the depressor effect of BK on arterial blood pressure in the normotensive anesthetized rat. Intracerebroventricular injection into mice does not show toxic activity. This chain is Bradykinin-potentiating peptide K12, found in Buthus occitanus (Common European scorpion).